Here is a 144-residue protein sequence, read N- to C-terminus: uncharacterized protein (144 aa).

Residues 72-90 (VAIGTSLIVGAGVAMEVSV) traverse the membrane as a helical segment.

The protein to yeast YCL21w.

It is found in the membrane. This is an uncharacterized protein from Saccharomyces cerevisiae (strain ATCC 204508 / S288c) (Baker's yeast).